Reading from the N-terminus, the 540-residue chain is DNA-(apurinic or apyrimidinic site) endonuclease (540 aa).

Asn206 and Glu239 together coordinate Mg(2+). The segment at 256–276 (NNKVYGGKKNEGEERNRGSVK) is disordered. A compositionally biased stretch (basic and acidic residues) spans 263–276 (KKNEGEERNRGSVK). The Mg(2+) site is built by Asp400, Asn402, Asp530, and His531. The Proton acceptor role is filled by His531.

This sequence belongs to the DNA repair enzymes AP/ExoA family. Mg(2+) serves as cofactor. Mn(2+) is required as a cofactor. In terms of processing, may be proteolytically cleaved.

The protein resides in the mitochondrion. It carries out the reaction Exonucleolytic cleavage in the 3'- to 5'-direction to yield nucleoside 5'-phosphates.. Functionally, multifunctional protein that plays a central role in mitochondrial DNA base excision repair pathway induced by oxidative stress. Has apurinic/apyrimidinic (AP) endonuclease activity towards double-stranded DNA (dsDNA). Has nucleotide incision repair (NIR) activity; acts on dsDNA with oxidized bases thymine glycol and 5,6-dihydro-2'-deoxyuridine. Has 3'-5' exonuclease; can use dsDNA templates with 3'-OH termini including blunt-end, gapped and mismatched 3'-recessed. Has 3'-phosphatase activity; cleaves 3'-phosphate from blunt, recessed and gapped dsDNA templates, followed by 3'-5' exonuclease activity. Has RNase H-like activity; cleaves RNA on 3'-recessed RNA-DNA duplex. Plays a role in merosome infection of host erythrocytes. The protein is DNA-(apurinic or apyrimidinic site) endonuclease of Plasmodium berghei (strain Anka).